The following is a 200-amino-acid chain: Peroxiredoxin (200 aa).

The Thioredoxin domain maps to 6 to 166; it reads ARIGHLAPGF…ILRLVQAFQF (161 aa). The active-site Cysteine sulfenic acid (-SOH) intermediate is the Cys-52.

Belongs to the peroxiredoxin family. AhpC/Prx1 subfamily. Homodimer; disulfide-linked, upon oxidation.

It carries out the reaction a hydroperoxide + [thioredoxin]-dithiol = an alcohol + [thioredoxin]-disulfide + H2O. In terms of biological role, thiol-specific peroxidase that catalyzes the reduction of hydrogen peroxide and organic hydroperoxides to water and alcohols, respectively. Plays a role in cell protection against oxidative stress by detoxifying peroxides and as sensor of hydrogen peroxide-mediated signaling events. The sequence is that of Peroxiredoxin from Oncorhynchus mykiss (Rainbow trout).